The primary structure comprises 312 residues: Ribosomal RNA small subunit methyltransferase H (312 aa).

S-adenosyl-L-methionine-binding positions include 33 to 35 (GGY), aspartate 51, phenylalanine 78, aspartate 97, and glutamine 104.

Belongs to the methyltransferase superfamily. RsmH family.

The protein localises to the cytoplasm. It carries out the reaction cytidine(1402) in 16S rRNA + S-adenosyl-L-methionine = N(4)-methylcytidine(1402) in 16S rRNA + S-adenosyl-L-homocysteine + H(+). In terms of biological role, specifically methylates the N4 position of cytidine in position 1402 (C1402) of 16S rRNA. This Orientia tsutsugamushi (strain Boryong) (Rickettsia tsutsugamushi) protein is Ribosomal RNA small subunit methyltransferase H.